The primary structure comprises 319 residues: Ribonucleoside-diphosphate reductase 2 subunit beta (319 aa).

Fe cation-binding residues include Asp-67, Glu-98, and His-101. Tyr-105 is a catalytic residue. Fe cation-binding residues include Glu-158, Glu-192, and His-195.

Belongs to the ribonucleoside diphosphate reductase small chain family. As to quaternary structure, tetramer of two alpha and two beta subunits. The cofactor is Fe cation.

The enzyme catalyses a 2'-deoxyribonucleoside 5'-diphosphate + [thioredoxin]-disulfide + H2O = a ribonucleoside 5'-diphosphate + [thioredoxin]-dithiol. Functionally, provides the precursors necessary for DNA synthesis. Catalyzes the biosynthesis of deoxyribonucleotides from the corresponding ribonucleotides. R2F contains the tyrosyl radical required for catalysis. This chain is Ribonucleoside-diphosphate reductase 2 subunit beta (nrdF), found in Salmonella typhimurium (strain LT2 / SGSC1412 / ATCC 700720).